Consider the following 63-residue polypeptide: Large ribosomal subunit protein uL29 (63 aa).

It belongs to the universal ribosomal protein uL29 family.

The chain is Large ribosomal subunit protein uL29 from Pseudomonas aeruginosa (strain UCBPP-PA14).